The sequence spans 212 residues: Protein Rv0786c (212 aa).

The chain is Protein Rv0786c from Mycobacterium tuberculosis (strain ATCC 25618 / H37Rv).